Consider the following 327-residue polypeptide: tRNA dimethylallyltransferase (327 aa).

Position 14–21 (14–21) interacts with ATP; the sequence is GPTASGKT. 16-21 is a binding site for substrate; sequence TASGKT. Interaction with substrate tRNA regions lie at residues 39–42 and 163–167; these read DSAL and QRIQR.

It belongs to the IPP transferase family. In terms of assembly, monomer. Mg(2+) is required as a cofactor.

The catalysed reaction is adenosine(37) in tRNA + dimethylallyl diphosphate = N(6)-dimethylallyladenosine(37) in tRNA + diphosphate. In terms of biological role, catalyzes the transfer of a dimethylallyl group onto the adenine at position 37 in tRNAs that read codons beginning with uridine, leading to the formation of N6-(dimethylallyl)adenosine (i(6)A). This Xanthomonas euvesicatoria pv. vesicatoria (strain 85-10) (Xanthomonas campestris pv. vesicatoria) protein is tRNA dimethylallyltransferase.